Here is a 921-residue protein sequence, read N- to C-terminus: Isoleucine--tRNA ligase (921 aa).

A 'HIGH' region motif is present at residues 57–67 (PYANGDIHMGH). An L-isoleucyl-5'-AMP-binding site is contributed by glutamate 552. The 'KMSKS' region signature appears at 593-597 (KMSKS). Lysine 596 lines the ATP pocket. 4 residues coordinate Zn(2+): cysteine 887, cysteine 890, cysteine 907, and cysteine 910.

The protein belongs to the class-I aminoacyl-tRNA synthetase family. IleS type 1 subfamily. In terms of assembly, monomer. It depends on Zn(2+) as a cofactor.

Its subcellular location is the cytoplasm. The catalysed reaction is tRNA(Ile) + L-isoleucine + ATP = L-isoleucyl-tRNA(Ile) + AMP + diphosphate. Its function is as follows. Catalyzes the attachment of isoleucine to tRNA(Ile). As IleRS can inadvertently accommodate and process structurally similar amino acids such as valine, to avoid such errors it has two additional distinct tRNA(Ile)-dependent editing activities. One activity is designated as 'pretransfer' editing and involves the hydrolysis of activated Val-AMP. The other activity is designated 'posttransfer' editing and involves deacylation of mischarged Val-tRNA(Ile). This chain is Isoleucine--tRNA ligase, found in Halalkalibacterium halodurans (strain ATCC BAA-125 / DSM 18197 / FERM 7344 / JCM 9153 / C-125) (Bacillus halodurans).